Consider the following 985-residue polypeptide: Vacuolar membrane protease (985 aa).

At 1–20 (MASSRAQRFNPIAFTPWPVT) the chain is on the cytoplasmic side. The chain crosses the membrane as a helical span at residues 21–41 (CITTIVYLALLIPILVINLVV). Residues 42–388 (PSAPETNPKG…MFGTAFAVFR (347 aa)) lie on the Vacuolar side of the membrane. N53, N116, and N119 each carry an N-linked (GlcNAc...) asparagine glycan. Positions 175 and 187 each coordinate Zn(2+). E221 serves as the catalytic Proton acceptor. Residue E222 participates in Zn(2+) binding. N238 carries N-linked (GlcNAc...) asparagine glycosylation. Positions 247 and 320 each coordinate Zn(2+). The chain crosses the membrane as a helical span at residues 389–409 (LHTLFAISVALLVIAPLVIFV). Topologically, residues 410-440 (TNRMYLFSMSKSLEGTGDQVSLRGLRGFSRT) are cytoplasmic. Residues 441 to 461 (PIILVTATTIPICLAYLLEKV) traverse the membrane as a helical segment. The Vacuolar segment spans residues 462–470 (NPYIVHSSQ). The helical transmembrane segment at 471–491 (FSVWSMMFSAWIFLAWFLACA) threads the bilayer. At 492–502 (ADFFRPSALHR) the chain is on the cytoplasmic side. The helical transmembrane segment at 503 to 523 (AYSYTWIFIATWIMLVINTVY) threads the bilayer. At 524-527 (ANQK) the chain is on the vacuolar side. A helical transmembrane segment spans residues 528-548 (GIAAGYFLLFYFAGAFLATWI). Over 549 to 666 (SYLELFALPR…TLPRWTWVLQ (118 aa)) the chain is Cytoplasmic. Positions 563 to 612 (ARQTTGRRPSSLSSRLLTSSADELRSNASPSTAEFPGAAGEDTDPTESTS) are disordered. A compositionally biased stretch (low complexity) spans 566–582 (TTGRRPSSLSSRLLTSS). A helical membrane pass occupies residues 667–687 (LLLLAPIVLILVGQLALFLTA). At 688 to 700 (SMCQVGSDGVSTF) the chain is on the vacuolar side. Residues 701–721 (VVYLACAVFTTLLCIPLFPLI) form a helical membrane-spanning segment. At 722–727 (HRFTYH) the chain is on the cytoplasmic side. A helical transmembrane segment spans residues 728–748 (IPTFLFLVFIGTLIYNLVAFP). At 749–985 (FSPANRLKTF…VEASHSFTIQ (237 aa)) the chain is on the vacuolar side. N-linked (GlcNAc...) asparagine glycans are attached at residues N767, N795, and N839.

It belongs to the peptidase M28 family. Zn(2+) serves as cofactor.

The protein localises to the vacuole membrane. Functionally, may be involved in vacuolar sorting and osmoregulation. The sequence is that of Vacuolar membrane protease from Ajellomyces capsulatus (strain G186AR / H82 / ATCC MYA-2454 / RMSCC 2432) (Darling's disease fungus).